Consider the following 380-residue polypeptide: Chaperone protein DnaJ (380 aa).

In terms of domain architecture, J spans 6–71; sequence DYYESLEVSR…QKRAAYDRYG (66 aa). The CR-type zinc finger occupies 136-215; sequence GVTKDVEVRT…CHGTGTEAKT (80 aa). Zn(2+) contacts are provided by Cys-149, Cys-152, Cys-167, Cys-170, Cys-189, Cys-192, Cys-203, and Cys-206. CXXCXGXG motif repeat units lie at residues 149 to 156, 167 to 174, 189 to 196, and 203 to 210; these read CEACHGSG, CPTCHGAG, CPTCHGSG, and CKVCHGTG.

Belongs to the DnaJ family. As to quaternary structure, homodimer. Zn(2+) serves as cofactor.

Its subcellular location is the cytoplasm. Its function is as follows. Participates actively in the response to hyperosmotic and heat shock by preventing the aggregation of stress-denatured proteins and by disaggregating proteins, also in an autonomous, DnaK-independent fashion. Unfolded proteins bind initially to DnaJ; upon interaction with the DnaJ-bound protein, DnaK hydrolyzes its bound ATP, resulting in the formation of a stable complex. GrpE releases ADP from DnaK; ATP binding to DnaK triggers the release of the substrate protein, thus completing the reaction cycle. Several rounds of ATP-dependent interactions between DnaJ, DnaK and GrpE are required for fully efficient folding. Also involved, together with DnaK and GrpE, in the DNA replication of plasmids through activation of initiation proteins. The protein is Chaperone protein DnaJ of Gluconobacter oxydans (strain 621H) (Gluconobacter suboxydans).